We begin with the raw amino-acid sequence, 156 residues long: MKLQLVAVGTKMPDWVQTGFLDYIKRFPKDMPFELTEVPAGKRGKNADIRRILEREGELMLAAVGKGNRIVTLDIPGKPWDTPALAGQLERWKQDGRDVSLLIGGPEGLAPTCKGAAEQSWSLSPLTLPHPLVRVLVAESLYRAWSITANHPYHRE.

S-adenosyl-L-methionine is bound by residues L73, G104, and L123–L128.

It belongs to the RNA methyltransferase RlmH family. In terms of assembly, homodimer.

It is found in the cytoplasm. The enzyme catalyses pseudouridine(1915) in 23S rRNA + S-adenosyl-L-methionine = N(3)-methylpseudouridine(1915) in 23S rRNA + S-adenosyl-L-homocysteine + H(+). Its function is as follows. Specifically methylates the pseudouridine at position 1915 (m3Psi1915) in 23S rRNA. This is Ribosomal RNA large subunit methyltransferase H from Edwardsiella ictaluri (strain 93-146).